The chain runs to 78 residues: Acyl carrier protein (78 aa).

The Carrier domain maps to 2–77 (SSIEERVKKI…LAINYINENL (76 aa)). S37 is modified (O-(pantetheine 4'-phosphoryl)serine).

The protein belongs to the acyl carrier protein (ACP) family. In terms of processing, 4'-phosphopantetheine is transferred from CoA to a specific serine of apo-ACP by AcpS. This modification is essential for activity because fatty acids are bound in thioester linkage to the sulfhydryl of the prosthetic group.

It localises to the cytoplasm. It participates in lipid metabolism; fatty acid biosynthesis. In terms of biological role, carrier of the growing fatty acid chain in fatty acid biosynthesis. The protein is Acyl carrier protein of Saccharophagus degradans (strain 2-40 / ATCC 43961 / DSM 17024).